The chain runs to 147 residues: Flagellar assembly factor FliW (147 aa).

Belongs to the FliW family. As to quaternary structure, interacts with translational regulator CsrA and flagellin(s).

It is found in the cytoplasm. Acts as an anti-CsrA protein, binds CsrA and prevents it from repressing translation of its target genes, one of which is flagellin. Binds to flagellin and participates in the assembly of the flagellum. In Treponema denticola (strain ATCC 35405 / DSM 14222 / CIP 103919 / JCM 8153 / KCTC 15104), this protein is Flagellar assembly factor FliW.